A 526-amino-acid chain; its full sequence is Protein spinster homolog 1 (526 aa).

Residues 1–44 (MTSRRSHGDVTPFLTQADNTEEEGVRDPESQSSDEEEEEGKDHG) form a disordered region. The next 12 helical transmembrane spans lie at 59–79 (VIIV…RFTV), 98–118 (GLVQ…FGYL), 126–146 (LIMC…SFVS), 159–179 (LVGV…ADLF), 187–207 (MLSF…IVGS), 218–238 (WALR…IFVA), 272–292 (FILS…LALW), 321–341 (MIFG…GVEI), 355–375 (LVCA…LAFA), 384–404 (VFIF…ADIL), 419–439 (LQIV…IGVI), and 463–483 (MICA…ALFI).

This sequence belongs to the major facilitator superfamily. Spinster (TC 2.A.1.49) family.

The protein localises to the lysosome membrane. The enzyme catalyses a 1-acyl-sn-glycero-3-phosphocholine(out) + H(+)(out) = a 1-acyl-sn-glycero-3-phosphocholine(in) + H(+)(in). The catalysed reaction is a 1-acyl-sn-glycero-3-phosphoethanolamine(out) + H(+)(out) = a 1-acyl-sn-glycero-3-phosphoethanolamine(in) + H(+)(in). It catalyses the reaction a 1-O-(1Z-alkenyl)-sn-glycero-3-phosphocholine(out) + H(+)(out) = a 1-O-(1Z-alkenyl)-sn-glycero-3-phosphocholine(in) + H(+)(in). It carries out the reaction a 1-O-(1Z-alkenyl)-sn-glycero-3-phosphoethanolamine(out) + H(+)(out) = a 1-O-(1Z-alkenyl)-sn-glycero-3-phosphoethanolamine(in) + H(+)(in). In terms of biological role, mediates the rate-limiting, proton-dependent, lysosomal efflux of lysophospholipids. Selective for zwitterionic headgroups such as lysophosphatidylcholine (LPC) and lysophosphatidylethanolamine (LPE). Essential player in lysosomal homeostasis. The polypeptide is Protein spinster homolog 1 (spns1) (Xenopus laevis (African clawed frog)).